We begin with the raw amino-acid sequence, 365 residues long: Peptide chain release factor 1 (365 aa).

Gln-242 bears the N5-methylglutamine mark.

This sequence belongs to the prokaryotic/mitochondrial release factor family. In terms of processing, methylated by PrmC. Methylation increases the termination efficiency of RF1.

It is found in the cytoplasm. Functionally, peptide chain release factor 1 directs the termination of translation in response to the peptide chain termination codons UAG and UAA. The sequence is that of Peptide chain release factor 1 from Fusobacterium nucleatum subsp. nucleatum (strain ATCC 25586 / DSM 15643 / BCRC 10681 / CIP 101130 / JCM 8532 / KCTC 2640 / LMG 13131 / VPI 4355).